Here is a 399-residue protein sequence, read N- to C-terminus: Dual-specificity RNA methyltransferase RlmN (399 aa).

The active-site Proton acceptor is the Glu122. The Radical SAM core domain maps to Glu128–Leu371. Cysteines 135 and 374 form a disulfide. [4Fe-4S] cluster contacts are provided by Cys142, Cys146, and Cys149. S-adenosyl-L-methionine contacts are provided by residues Gly200 to Glu201, Ser232, Ser254 to His256, and Asn331. The active-site S-methylcysteine intermediate is Cys374.

This sequence belongs to the radical SAM superfamily. RlmN family. It depends on [4Fe-4S] cluster as a cofactor.

It is found in the cytoplasm. It catalyses the reaction adenosine(2503) in 23S rRNA + 2 reduced [2Fe-2S]-[ferredoxin] + 2 S-adenosyl-L-methionine = 2-methyladenosine(2503) in 23S rRNA + 5'-deoxyadenosine + L-methionine + 2 oxidized [2Fe-2S]-[ferredoxin] + S-adenosyl-L-homocysteine. The catalysed reaction is adenosine(37) in tRNA + 2 reduced [2Fe-2S]-[ferredoxin] + 2 S-adenosyl-L-methionine = 2-methyladenosine(37) in tRNA + 5'-deoxyadenosine + L-methionine + 2 oxidized [2Fe-2S]-[ferredoxin] + S-adenosyl-L-homocysteine. In terms of biological role, specifically methylates position 2 of adenine 2503 in 23S rRNA and position 2 of adenine 37 in tRNAs. m2A2503 modification seems to play a crucial role in the proofreading step occurring at the peptidyl transferase center and thus would serve to optimize ribosomal fidelity. This Rhodopseudomonas palustris (strain TIE-1) protein is Dual-specificity RNA methyltransferase RlmN.